The primary structure comprises 146 residues: MNTISGMSSLTAIGMLTPVQSMTCLMILFVSTAMCLYSQGFVLMGMLYVTMYVGAMAMLFLFMLSLLKMEYTPQGTITPLMVTLLAMCLMPLDITYETYGMVTQMENVTDELVMVGNQLYTEYAMLLMLTGMMLMLSVMGAMSITK.

Transmembrane regions (helical) follow at residues 10–30 (LTAIGMLTPVQSMTCLMILFV), 41–61 (FVLMGMLYVTMYVGAMAMLFL), 75–95 (GTITPLMVTLLAMCLMPLDIT), and 124–144 (AMLLMLTGMMLMLSVMGAMSI).

It belongs to the complex I subunit 6 family.

The protein resides in the mitochondrion membrane. It catalyses the reaction a ubiquinone + NADH + 5 H(+)(in) = a ubiquinol + NAD(+) + 4 H(+)(out). Functionally, core subunit of the mitochondrial membrane respiratory chain NADH dehydrogenase (Complex I) that is believed to belong to the minimal assembly required for catalysis. Complex I functions in the transfer of electrons from NADH to the respiratory chain. The immediate electron acceptor for the enzyme is believed to be ubiquinone. The protein is NADH-ubiquinone oxidoreductase chain 6 (ND6) of Debaryomyces hansenii (strain ATCC 36239 / CBS 767 / BCRC 21394 / JCM 1990 / NBRC 0083 / IGC 2968) (Yeast).